The primary structure comprises 113 residues: GFPIPDPYCWDISFRTFYTIVDDEHKTLFNGILLLSQADNADHLNELRRCTGKHFLNEQQLMQASQYAGYAEHKKAHDDFIHKLDTWDGDVTYAKNWLVNHIKTIDFKYRGKI.

Histidine 25, histidine 54, glutamate 58, histidine 73, histidine 77, histidine 101, and aspartate 106 together coordinate Fe cation.

It belongs to the hemerythrin family. In terms of assembly, homooctamer.

In terms of biological role, hemerythrin is a respiratory protein in blood cells of certain marine worms. The oxygen-binding site in each chain contains two iron atoms. This chain is Hemerythrin, found in Themiste dyscrita (Peanut worm).